We begin with the raw amino-acid sequence, 555 residues long: Chaperonin GroEL (555 aa).

ATP is bound by residues 29 to 32 (TLGP), lysine 50, 86 to 90 (DGTTT), glycine 418, and aspartate 499. Residues 528–555 (HEEDNNTGNRSGGGVGGGHHGGMGGMDF) are disordered. A compositionally biased stretch (gly residues) spans 537 to 555 (RSGGGVGGGHHGGMGGMDF).

Belongs to the chaperonin (HSP60) family. As to quaternary structure, forms a cylinder of 14 subunits composed of two heptameric rings stacked back-to-back. Interacts with the co-chaperonin GroES.

It localises to the cytoplasm. The catalysed reaction is ATP + H2O + a folded polypeptide = ADP + phosphate + an unfolded polypeptide.. Together with its co-chaperonin GroES, plays an essential role in assisting protein folding. The GroEL-GroES system forms a nano-cage that allows encapsulation of the non-native substrate proteins and provides a physical environment optimized to promote and accelerate protein folding. This chain is Chaperonin GroEL, found in Orientia tsutsugamushi (Rickettsia tsutsugamushi).